A 452-amino-acid polypeptide reads, in one-letter code: Bifunctional protein GlmU (452 aa).

The interval M1 to K232 is pyrophosphorylase. UDP-N-acetyl-alpha-D-glucosamine-binding positions include L11–G14, K25, Q78, and G83–T84. D108 lines the Mg(2+) pocket. The UDP-N-acetyl-alpha-D-glucosamine site is built by G144, E158, N173, and N230. Position 230 (N230) interacts with Mg(2+). The linker stretch occupies residues A233 to A253. An N-acetyltransferase region spans residues G254–K452. R319 and K337 together coordinate UDP-N-acetyl-alpha-D-glucosamine. Residue H349 is the Proton acceptor of the active site. The UDP-N-acetyl-alpha-D-glucosamine site is built by Y352 and N363. Residues A366, N372 to Y373, S391, S409, and R426 each bind acetyl-CoA.

In the N-terminal section; belongs to the N-acetylglucosamine-1-phosphate uridyltransferase family. This sequence in the C-terminal section; belongs to the transferase hexapeptide repeat family. As to quaternary structure, homotrimer. Mg(2+) is required as a cofactor.

The protein localises to the cytoplasm. It catalyses the reaction alpha-D-glucosamine 1-phosphate + acetyl-CoA = N-acetyl-alpha-D-glucosamine 1-phosphate + CoA + H(+). The catalysed reaction is N-acetyl-alpha-D-glucosamine 1-phosphate + UTP + H(+) = UDP-N-acetyl-alpha-D-glucosamine + diphosphate. Its pathway is nucleotide-sugar biosynthesis; UDP-N-acetyl-alpha-D-glucosamine biosynthesis; N-acetyl-alpha-D-glucosamine 1-phosphate from alpha-D-glucosamine 6-phosphate (route II): step 2/2. It participates in nucleotide-sugar biosynthesis; UDP-N-acetyl-alpha-D-glucosamine biosynthesis; UDP-N-acetyl-alpha-D-glucosamine from N-acetyl-alpha-D-glucosamine 1-phosphate: step 1/1. The protein operates within bacterial outer membrane biogenesis; LPS lipid A biosynthesis. Its function is as follows. Catalyzes the last two sequential reactions in the de novo biosynthetic pathway for UDP-N-acetylglucosamine (UDP-GlcNAc). The C-terminal domain catalyzes the transfer of acetyl group from acetyl coenzyme A to glucosamine-1-phosphate (GlcN-1-P) to produce N-acetylglucosamine-1-phosphate (GlcNAc-1-P), which is converted into UDP-GlcNAc by the transfer of uridine 5-monophosphate (from uridine 5-triphosphate), a reaction catalyzed by the N-terminal domain. The polypeptide is Bifunctional protein GlmU (Rhodopseudomonas palustris (strain BisA53)).